Here is a 628-residue protein sequence, read N- to C-terminus: Nucleoside-triphosphatase 1 (628 aa).

The first 25 residues, 1–25, serve as a signal peptide directing secretion; sequence MWLPVYVPLLLVFGVSLSLPQGSLG. E236 acts as the Proton acceptor in catalysis. A glycan (N-linked (GlcNAc...) asparagine) is linked at N432.

It belongs to the GDA1/CD39 NTPase family. As to quaternary structure, homotetramer.

The protein localises to the secreted. Its subcellular location is the parasitophorous vacuole. The catalysed reaction is a ribonucleoside 5'-triphosphate + H2O = a ribonucleoside 5'-diphosphate + phosphate + H(+). In terms of biological role, may perform an important processing step in the conversion of high energy nucleotides prior to uptake by the parasite and may contribute to intracellular survival and virulence. NTPAse-I has a specific activity 4.5-fold higher than NTPAse-II in hydrolysis of ATP. The primary difference between these isozymes lies in their ability to hydrolyze nucleoside triphosphate versus diphosphate substrates. While NTPAse-II hydrolyzes ATP to ADP and ADP to AMP at almost the same rate, NTPAse-I hydrolyzes ADP to AMP at a much slower rate (0.7% of the rate for ATP). This is Nucleoside-triphosphatase 1 (NTP3) from Toxoplasma gondii.